A 241-amino-acid polypeptide reads, in one-letter code: Xyloglucan-specific endo-beta-1,4-glucanase A (241 aa).

The N-terminal stretch at 1–16 (MKVLALSALLSLASAA) is a signal peptide. The N-linked (GlcNAc...) asparagine glycan is linked to N47.

It belongs to the glycosyl hydrolase 12 (cellulase H) family.

The protein localises to the secreted. The catalysed reaction is xyloglucan + H2O = xyloglucan oligosaccharides.. In terms of biological role, catalyzes endohydrolysis of 1,4-beta-D-glucosidic linkages in xyloglucan with retention of the beta-configuration of the glycosyl residues. Specific for xyloglucan and does not hydrolyze other cell wall components. In Aspergillus niger, this protein is Xyloglucan-specific endo-beta-1,4-glucanase A (xgeA).